A 120-amino-acid polypeptide reads, in one-letter code: MGENSFSRELRLLTPTHFEFVFKNATPAVSPNLTLLARHNDSPNPRLGITVAKKRVKKAHDRNRIKRIVRESFRNHQQSLPNIDIVVVGKSGLDKLSNQELFLVLSKLWKKLAKRCEKSQ.

The protein belongs to the RnpA family. Consists of a catalytic RNA component (M1 or rnpB) and a protein subunit.

The enzyme catalyses Endonucleolytic cleavage of RNA, removing 5'-extranucleotides from tRNA precursor.. Its function is as follows. RNaseP catalyzes the removal of the 5'-leader sequence from pre-tRNA to produce the mature 5'-terminus. It can also cleave other RNA substrates such as 4.5S RNA. The protein component plays an auxiliary but essential role in vivo by binding to the 5'-leader sequence and broadening the substrate specificity of the ribozyme. The sequence is that of Ribonuclease P protein component from Pseudoalteromonas atlantica (strain T6c / ATCC BAA-1087).